The sequence spans 60 residues: Large ribosomal subunit protein uL30 (60 aa).

The protein belongs to the universal ribosomal protein uL30 family. As to quaternary structure, part of the 50S ribosomal subunit.

The polypeptide is Large ribosomal subunit protein uL30 (Leifsonia xyli subsp. xyli (strain CTCB07)).